A 38-amino-acid chain; its full sequence is Beta-galactosidase (38 aa).

Belongs to the glycosyl hydrolase 35 family. Heterodimer of a large and a small subunit. In terms of processing, the small subunit is N-glycosylated.

The enzyme catalyses Hydrolysis of terminal non-reducing beta-D-galactose residues in beta-D-galactosides.. Its function is as follows. Involved in cell wall degradation. Degrades polysaccharides containing beta-(1--&gt;4)-linked galactans, acting as an exo-(1--&gt;4)-beta-D-galactanase. The chain is Beta-galactosidase from Hordeum vulgare (Barley).